Here is a 555-residue protein sequence, read N- to C-terminus: Wee1-like protein kinase 2-A (555 aa).

2 disordered regions span residues 1 to 81 (MRTA…SVGA) and 149 to 175 (FTPE…DCRT). Over residues 38-48 (SPVSSWRTNNC) the composition is skewed to polar residues. Residues 68-78 (SPSSDYSPDPS) are compositionally biased toward low complexity. Residues 149-160 (FTPESYRQTHFQ) show a composition bias toward polar residues. Residues 210–480 (FLEIEKIGAG…AASLAKNSVL (271 aa)) form the Protein kinase domain. ATP contacts are provided by residues 216-224 (IGAGEFGSV) and K239. Residue D337 is the Proton acceptor of the active site. Positions 342 and 374 each coordinate Mg(2+). Residues 487–513 (AAQLQKQLNVEKFKTAMLERELKAAKL) adopt a coiled-coil conformation. At S549 the chain carries Phosphoserine.

The protein belongs to the protein kinase superfamily. Ser/Thr protein kinase family. WEE1 subfamily. In terms of assembly, interacts with prmt5; this promotes protesomal degradation of wee2-a in the nucleus. The interaction with prmt5 is disrupted upon activation of the DNA replication checkpoint. Subject to proteasomal degradation in the nucleus. As to expression, detected in egg (at protein level). Oocyte-specific maternally supplied protein. Present in immature and mature oocytes and in early (pregastrula) embryos, but not in post-gastrula embryos.

The protein resides in the nucleus. It localises to the cytoplasm. It is found in the cytosol. The catalysed reaction is L-tyrosyl-[protein] + ATP = O-phospho-L-tyrosyl-[protein] + ADP + H(+). In terms of biological role, oocyte-specific protein tyrosine kinase that phosphorylates and inhibits cdk1 and acts as a key regulator of meiosis. Required to maintain meiotic arrest in oocytes by phosphorylating cdk1 at 'Tyr-15', which inhibits cdk1 activity and prevents meiotic reentry. Negative regulator of mitosis. Involved in the mitotic DNA replication checkpoint. This is Wee1-like protein kinase 2-A (wee2-a) from Xenopus laevis (African clawed frog).